The sequence spans 356 residues: D-alanine--D-alanine ligase (356 aa).

The 206-residue stretch at 134–339 (KQLFAHRGLP…YSDLIKKLIE (206 aa)) folds into the ATP-grasp domain. Residue 167–222 (HDKLEYPVFVKPANLGSSVGISKCNNEEELKNGIEEAFQFDRKLVIEQGIEAREIE) coordinates ATP. Mg(2+) contacts are provided by Asp-293, Glu-306, and Asn-308.

Belongs to the D-alanine--D-alanine ligase family. Mg(2+) serves as cofactor. The cofactor is Mn(2+).

Its subcellular location is the cytoplasm. The enzyme catalyses 2 D-alanine + ATP = D-alanyl-D-alanine + ADP + phosphate + H(+). Its pathway is cell wall biogenesis; peptidoglycan biosynthesis. Its function is as follows. Cell wall formation. The protein is D-alanine--D-alanine ligase of Staphylococcus saprophyticus subsp. saprophyticus (strain ATCC 15305 / DSM 20229 / NCIMB 8711 / NCTC 7292 / S-41).